The chain runs to 166 residues: NAD(P)H-quinone oxidoreductase subunit I, chloroplastic (166 aa).

4Fe-4S ferredoxin-type domains are found at residues 55-84 (GRIHFEFDKCIACEVCVRVCPIDLPVVDWK) and 95-124 (LNYSIDFGICIFCGNCVEYCPTNCLSMTEE). [4Fe-4S] cluster is bound by residues cysteine 64, cysteine 67, cysteine 70, cysteine 74, cysteine 104, cysteine 107, cysteine 110, and cysteine 114.

This sequence belongs to the complex I 23 kDa subunit family. As to quaternary structure, NDH is composed of at least 16 different subunits, 5 of which are encoded in the nucleus. It depends on [4Fe-4S] cluster as a cofactor.

Its subcellular location is the plastid. The protein resides in the chloroplast thylakoid membrane. The enzyme catalyses a plastoquinone + NADH + (n+1) H(+)(in) = a plastoquinol + NAD(+) + n H(+)(out). It catalyses the reaction a plastoquinone + NADPH + (n+1) H(+)(in) = a plastoquinol + NADP(+) + n H(+)(out). NDH shuttles electrons from NAD(P)H:plastoquinone, via FMN and iron-sulfur (Fe-S) centers, to quinones in the photosynthetic chain and possibly in a chloroplast respiratory chain. The immediate electron acceptor for the enzyme in this species is believed to be plastoquinone. Couples the redox reaction to proton translocation, and thus conserves the redox energy in a proton gradient. The protein is NAD(P)H-quinone oxidoreductase subunit I, chloroplastic of Aphanactis jamesoniana.